Consider the following 87-residue polypeptide: Small ribosomal subunit protein uS17 (87 aa).

Belongs to the universal ribosomal protein uS17 family. In terms of assembly, part of the 30S ribosomal subunit.

One of the primary rRNA binding proteins, it binds specifically to the 5'-end of 16S ribosomal RNA. The protein is Small ribosomal subunit protein uS17 of Geobacillus sp. (strain WCH70).